The primary structure comprises 558 residues: Adenine deaminase (558 aa).

Belongs to the metallo-dependent hydrolases superfamily. Adenine deaminase family. It depends on Mn(2+) as a cofactor.

The catalysed reaction is adenine + H2O + H(+) = hypoxanthine + NH4(+). The protein is Adenine deaminase of Methanoregula boonei (strain DSM 21154 / JCM 14090 / 6A8).